The primary structure comprises 521 residues: Probable cytochrome P450 12d1 distal, mitochondrial (521 aa).

A mitochondrion-targeting transit peptide spans 1–19; sequence MNTLSSARSVAIYVGPVRS. Position 467 (Cys-467) interacts with heme.

The protein belongs to the cytochrome P450 family. The cofactor is heme.

The protein localises to the mitochondrion membrane. In Drosophila melanogaster (Fruit fly), this protein is Probable cytochrome P450 12d1 distal, mitochondrial.